A 329-amino-acid polypeptide reads, in one-letter code: PTS-dependent dihydroxyacetone kinase 1, dihydroxyacetone-binding subunit DhaK (329 aa).

In terms of domain architecture, DhaK spans 7 to 329 (GTDQVVEQMV…LKLPVDTIAW (323 aa)). Dihydroxyacetone contacts are provided by residues 53–56 (GSGH), Lys104, and Asp109. Catalysis depends on His56, which acts as the Proton acceptor. The active-site Tele-hemiaminal-histidine intermediate is His218.

As to quaternary structure, homodimer. The dihydroxyacetone kinase complex is composed of a homodimer of DhaM, a homodimer of DhaK and the subunit DhaL.

Its subcellular location is the cytoplasm. The catalysed reaction is dihydroxyacetone + phosphoenolpyruvate = dihydroxyacetone phosphate + pyruvate. It functions in the pathway polyol metabolism; glycerol degradation. Functionally, dihydroxyacetone binding subunit of the dihydroxyacetone kinase, which is responsible for the phosphoenolpyruvate (PEP)-dependent phosphorylation of dihydroxyacetone via a phosphoryl group transfer from DhaL-ATP. The chain is PTS-dependent dihydroxyacetone kinase 1, dihydroxyacetone-binding subunit DhaK from Listeria innocua serovar 6a (strain ATCC BAA-680 / CLIP 11262).